The chain runs to 313 residues: Tyrosine recombinase XerC (313 aa).

The Core-binding (CB) domain maps to 1–85 (MNDQVEAFLR…AVKSFFAFLT (85 aa)). The Tyr recombinase domain occupies 106–291 (DLPRALTPHQ…NHASSAQPVR (186 aa)). Active-site residues include arginine 147, lysine 171, histidine 243, arginine 246, and histidine 269. The active-site O-(3'-phospho-DNA)-tyrosine intermediate is tyrosine 278.

It belongs to the 'phage' integrase family. XerC subfamily. As to quaternary structure, forms a cyclic heterotetrameric complex composed of two molecules of XerC and two molecules of XerD.

The protein resides in the cytoplasm. Functionally, site-specific tyrosine recombinase, which acts by catalyzing the cutting and rejoining of the recombining DNA molecules. The XerC-XerD complex is essential to convert dimers of the bacterial chromosome into monomers to permit their segregation at cell division. It also contributes to the segregational stability of plasmids. In Roseiflexus sp. (strain RS-1), this protein is Tyrosine recombinase XerC.